A 131-amino-acid chain; its full sequence is Small ribosomal subunit protein uS8 (131 aa).

Belongs to the universal ribosomal protein uS8 family. Part of the 30S ribosomal subunit. Contacts proteins S5 and S12.

In terms of biological role, one of the primary rRNA binding proteins, it binds directly to 16S rRNA central domain where it helps coordinate assembly of the platform of the 30S subunit. The protein is Small ribosomal subunit protein uS8 of Finegoldia magna (strain ATCC 29328 / DSM 20472 / WAL 2508) (Peptostreptococcus magnus).